The following is a 271-amino-acid chain: Putative phosphoenolpyruvate synthase regulatory protein (271 aa).

ADP is bound at residue 151–158 (GVSRSGKT).

Belongs to the pyruvate, phosphate/water dikinase regulatory protein family. PSRP subfamily.

The enzyme catalyses [pyruvate, water dikinase] + ADP = [pyruvate, water dikinase]-phosphate + AMP + H(+). It carries out the reaction [pyruvate, water dikinase]-phosphate + phosphate + H(+) = [pyruvate, water dikinase] + diphosphate. In terms of biological role, bifunctional serine/threonine kinase and phosphorylase involved in the regulation of the phosphoenolpyruvate synthase (PEPS) by catalyzing its phosphorylation/dephosphorylation. This is Putative phosphoenolpyruvate synthase regulatory protein from Paraburkholderia xenovorans (strain LB400).